Reading from the N-terminus, the 356-residue chain is Protein MGF 360-3L (356 aa).

One copy of the ANK repeat lies at 61 to 93 (KLNTALVLAVKENNDDLIMLFTEWGANINYGLL).

It belongs to the asfivirus MGF 360 family.

In terms of biological role, plays a role in virus cell tropism, and may be required for efficient virus replication in macrophages. The sequence is that of Protein MGF 360-3L from Ornithodoros (relapsing fever ticks).